A 343-amino-acid polypeptide reads, in one-letter code: WAT1-related protein At1g43650 (343 aa).

10 helical membrane-spanning segments follow: residues 9 to 29 (MAMV…KVAI), 36 to 56 (FVFV…FAFF), 65 to 85 (LSFI…TLSL), 98 to 118 (TFAA…ALLF), 130 to 150 (GVAK…FAFV), 175 to 195 (SVKG…WIIM), 209 to 229 (LVAL…VAVN), 239 to 259 (FGLP…LTYW), 272 to 292 (FTAL…SFLF), and 296 to 316 (FYLG…LGLW). EamA domains follow at residues 16 to 139 (IVYA…GSMV) and 188 to 313 (CWCL…GLYL).

Belongs to the drug/metabolite transporter (DMT) superfamily. Plant drug/metabolite exporter (P-DME) (TC 2.A.7.4) family.

It localises to the membrane. The polypeptide is WAT1-related protein At1g43650 (Arabidopsis thaliana (Mouse-ear cress)).